A 509-amino-acid chain; its full sequence is MQFLWLCLLSAVTLQFTGTLAFYPIKLPDFTKGIISHHGSVGRRFFTFPGLYKHAHTGSTTLNIRRGPSNYRRDNNYPAQIASPPTAPNTLGINNDGYDFSYFSEVKVGSEGQKMWMLIDTGASGTWVFGSDCTSKACGRHNTFGKEDSKTIKVTDEKWGVTYGTGKVSGVIVNDTMSFAGFELVTPFGSASTASDDFLNYPMDGILGIGPQDPNAKTPTVVQLLMQQKLLKSNVIGINLQRASEGATDGQITFGDIDKSKFSGELIYSNVVPNGYQWEIAMDDLIMDGKSLNLKGRTGIIDTGTSFLILPPADADLIHSMIPQADKGSGFYTLPCSTKVDIKLSIGGVEYTIQPDDYVGNETATKGTCNSLIVGRQILGPKQWLVGDVFLKNVYSVFDFDKNRVGLAARKYAGTKNPPSSTPSPGMFLLHAIHCQKTISVLMLHIDPTSNKAPSGGSPGLPAESGSDSTTNGEATNGATSSPNSSSSVLTPTWLTLAVFFAIGSSLWS.

An N-terminal signal peptide occupies residues 1–21 (MQFLWLCLLSAVTLQFTGTLA). The Peptidase A1 domain maps to 102-408 (YFSEVKVGSE…DFDKNRVGLA (307 aa)). Residue Asp120 is part of the active site. Asn174 is a glycosylation site (N-linked (GlcNAc...) asparagine). Asp302 is an active-site residue. Asn361 is a glycosylation site (N-linked (GlcNAc...) asparagine). The disordered stretch occupies residues 451–489 (NKAPSGGSPGLPAESGSDSTTNGEATNGATSSPNSSSSV). Over residues 466–480 (GSDSTTNGEATNGAT) the composition is skewed to polar residues. Residue Asn484 is glycosylated (N-linked (GlcNAc...) asparagine). Ser485 carries GPI-anchor amidated serine lipidation. Positions 486 to 509 (SSSVLTPTWLTLAVFFAIGSSLWS) are cleaved as a propeptide — removed in mature form.

The protein belongs to the peptidase A1 family.

It localises to the cell membrane. In terms of biological role, probable GPI-anchored aspartic-type endopeptidase which contributes to virulence. The chain is Probable aspartic-type endopeptidase CTSD (CTSD) from Arthroderma benhamiae (strain ATCC MYA-4681 / CBS 112371) (Trichophyton mentagrophytes).